Here is an 874-residue protein sequence, read N- to C-terminus: Alanine--tRNA ligase (874 aa).

Zn(2+) contacts are provided by His562, His566, Cys664, and His668.

Belongs to the class-II aminoacyl-tRNA synthetase family. It depends on Zn(2+) as a cofactor.

It is found in the cytoplasm. The enzyme catalyses tRNA(Ala) + L-alanine + ATP = L-alanyl-tRNA(Ala) + AMP + diphosphate. Functionally, catalyzes the attachment of alanine to tRNA(Ala) in a two-step reaction: alanine is first activated by ATP to form Ala-AMP and then transferred to the acceptor end of tRNA(Ala). Also edits incorrectly charged Ser-tRNA(Ala) and Gly-tRNA(Ala) via its editing domain. The sequence is that of Alanine--tRNA ligase from Shewanella halifaxensis (strain HAW-EB4).